Here is a 127-residue protein sequence, read N- to C-terminus: Egg cell-secreted protein 1.4 (127 aa).

The first 25 residues, 1–25, serve as a signal peptide directing secretion; that stretch reads MASNTTFLFSTVTLLIILLNTTVSG.

This sequence belongs to the plant egg cell-secreted peptide family. Restricted to female reproductive tissues, specifically accumulating in storage vesicles of the unfertilized egg cell.

It is found in the cytoplasmic vesicle. It localises to the secreted. In terms of biological role, involved in the regulation of gamete interactions during the double fertilization and to prevent multiple-pollen tube attraction; mediates the redistribution of the gamete fusogen HAP2/GCS1 to the cell surface after secretion upon sperm arrival. The chain is Egg cell-secreted protein 1.4 (EC1.4) from Arabidopsis thaliana (Mouse-ear cress).